A 125-amino-acid polypeptide reads, in one-letter code: Large-conductance mechanosensitive channel (125 aa).

3 helical membrane passes run 19-39 (VGVIIGGAFTAIVNSLVKYII), 42-62 (FLGLFVGAIDFSDLVFKIGNA), and 66-86 (VGSFLNAVINFLIIAFVVFLM).

Belongs to the MscL family. Homopentamer.

It is found in the cell membrane. Channel that opens in response to stretch forces in the membrane lipid bilayer. May participate in the regulation of osmotic pressure changes within the cell. In Ligilactobacillus salivarius (strain UCC118) (Lactobacillus salivarius), this protein is Large-conductance mechanosensitive channel.